The following is a 269-amino-acid chain: Putative aga operon transcriptional repressor (269 aa).

The 56-residue stretch at 15–70 (TSERREQIIQRLRQQGSVQVNDLSALYGVSTVTIRNDLAFLEKQGIAVRAYGGALI) folds into the HTH deoR-type domain. The segment at residues 32 to 51 (VQVNDLSALYGVSTVTIRND) is a DNA-binding region (H-T-H motif).

Probable repressor for the aga operon for N-acetyl galactosamine transport and metabolism. This chain is Putative aga operon transcriptional repressor (agaR), found in Escherichia coli O157:H7.